The primary structure comprises 185 residues: Ribosome-recycling factor (185 aa).

The protein belongs to the RRF family.

The protein localises to the cytoplasm. Functionally, responsible for the release of ribosomes from messenger RNA at the termination of protein biosynthesis. May increase the efficiency of translation by recycling ribosomes from one round of translation to another. The polypeptide is Ribosome-recycling factor (Streptococcus pneumoniae serotype 2 (strain D39 / NCTC 7466)).